The following is a 379-amino-acid chain: Alcohol dehydrogenase class-2 isozyme 2 (379 aa).

Residues Cys47, His69, Cys99, Cys102, Cys105, Cys113, and Cys176 each contribute to the Zn(2+) site. Residues 205–210 (GLGGVG), Asp229, Lys234, 298–300 (VGV), and Arg374 each bind NAD(+).

Belongs to the zinc-containing alcohol dehydrogenase family. Class-II subfamily. As to quaternary structure, homodimer. The cofactor is Zn(2+).

The protein localises to the cytoplasm. The enzyme catalyses a primary alcohol + NAD(+) = an aldehyde + NADH + H(+). It catalyses the reaction a secondary alcohol + NAD(+) = a ketone + NADH + H(+). This chain is Alcohol dehydrogenase class-2 isozyme 2 (ADH2-2), found in Oryctolagus cuniculus (Rabbit).